The chain runs to 723 residues: Tripartite motif-containing protein 42 (723 aa).

Residues 146-192 (CPMCNRLRLHSFMLPCNHSLCEKCLRQLQKHAEVTENFFILICPMCS) form an RING-type zinc finger. B box-type zinc fingers lie at residues 235 to 280 (PILC…FVDT) and 285 to 326 (QDEK…TVSL). Residues Cys290, His293, Cys313, and His318 each coordinate Zn(2+). Residues 382–412 (KLRAILQEKEKIIMEQIENLEVSRQKEIEKY) are a coiled coil. The COS domain maps to 434-492 (LKETGQVAFLQSAKILVDQIEEGIQNTFRPDPQLRLHSLHCIPLDFAELSNAIHELFPT). The Fibronectin type-III domain maps to 603-701 (TPGPIVIYQT…DICKVVTPDG (99 aa)).

This sequence belongs to the TRIM/RBCC family.

The protein is Tripartite motif-containing protein 42 (Trim42) of Mus musculus (Mouse).